A 333-amino-acid polypeptide reads, in one-letter code: Sphingomyelinase C (333 aa).

An N-terminal signal peptide occupies residues 1–27 (MKGKLLKGVLSFGIGLGVLYGGSSVQA). The cysteines at positions 150 and 186 are disulfide-linked.

The protein belongs to the neutral sphingomyelinase family. Mg(2+) serves as cofactor.

It is found in the secreted. It catalyses the reaction a sphingomyelin + H2O = phosphocholine + an N-acylsphing-4-enine + H(+). Its activity is regulated as follows. Activated by cobalt and manganese ions. Required, with sphingomyelinase, to effect target cell lysis (hemolysis). In Bacillus cereus, this protein is Sphingomyelinase C (sph).